We begin with the raw amino-acid sequence, 1229 residues long: Phosphorylase b kinase regulatory subunit alpha, liver isoform (1229 aa).

Over residues 625–646 (DSLLEDDEEQEEEEEDKFEDDY) the composition is skewed to acidic residues. Positions 625–648 (DSLLEDDEEQEEEEEDKFEDDYNN) are disordered. The interval 825-855 (LEELYIQAGACKEWGLIRYISGILRKRVEVL) is calmodulin-binding. Positions 1024–1050 (EIKQRCSSPSTPSGILSPVGPGPADGQ) are disordered. The segment covering 1028 to 1037 (RCSSPSTPSG) has biased composition (polar residues). A calmodulin-binding region spans residues 1052 to 1092 (HWVERQGQWLRRRRLDGAINRVPVGFYQKVWKILQKCHGLS). C1226 carries S-farnesyl cysteine lipidation.

It belongs to the phosphorylase b kinase regulatory chain family. Polymer of 16 chains, four each of alpha, beta, gamma, and delta. Alpha and beta are regulatory chains, gamma is the catalytic chain, and delta is calmodulin. In terms of processing, although the final Cys may be farnesylated, the terminal tripeptide is probably not removed, and the C-terminus is not methylated.

The protein localises to the cell membrane. Its pathway is glycan biosynthesis; glycogen metabolism. Its activity is regulated as follows. By phosphorylation of various serine residues and by calcium. Functionally, phosphorylase b kinase catalyzes the phosphorylation of serine in certain substrates, including troponin I. The alpha chain may bind calmodulin. The chain is Phosphorylase b kinase regulatory subunit alpha, liver isoform (phka2) from Takifugu rubripes (Japanese pufferfish).